Here is a 190-residue protein sequence, read N- to C-terminus: Frizzled-6 (190 aa).

Positions 1 to 20 (FGFAWPEELECSRLVNCDET) constitute an FZ domain. Residues 1–89 (FGFAWPEELE…NYELDVAKSF (89 aa)) are Extracellular-facing. The helical transmembrane segment at 90-110 (IGIVSIFCLCATLFTFLTFLI) threads the bilayer. Over 111–121 (DVKRFRYPERP) the chain is Cytoplasmic. A helical membrane pass occupies residues 122-142 (IIYYSVCYSIVSLMYFIGFLL). At 143-169 (GNRTACNKADDKLEIGETVVLGSQNKA) the chain is on the extracellular side. Asparagine 144 carries an N-linked (GlcNAc...) asparagine glycan. Residues 170 to 190 (CTVLFMVLYFFTMAGTIWWVI) form a helical membrane-spanning segment.

Belongs to the G-protein coupled receptor Fz/Smo family.

It is found in the membrane. The protein localises to the cell membrane. It localises to the cell surface. Its subcellular location is the apical cell membrane. The protein resides in the cytoplasmic vesicle membrane. Receptor for Wnt proteins. Most of frizzled receptors are coupled to the beta-catenin canonical signaling pathway, which leads to the activation of disheveled proteins, inhibition of GSK-3 kinase, nuclear accumulation of beta-catenin and activation of Wnt target genes. A second signaling pathway involving PKC and calcium fluxes has been seen for some family members, but it is not yet clear if it represents a distinct pathway or if it can be integrated in the canonical pathway, as PKC seems to be required for Wnt-mediated inactivation of GSK-3 kinase. Both pathways seem to involve interactions with G-proteins. Activation by Wnt5A stimulates PKC activity via a G-protein-dependent mechanism. Involved in transduction and intercellular transmission of polarity information during tissue morphogenesis and/or in differentiated tissues. Together with FZD3, may be involved in the neural tube closure and plays a role in the regulation of the establishment of planar cell polarity (PCP), particularly in the orientation of asymmetric bundles of stereocilia on the apical faces of a subset of auditory and vestibular sensory cells located in the inner ear. The protein is Frizzled-6 (FZD6) of Gallus gallus (Chicken).